The sequence spans 443 residues: Probable D-serine dehydratase (443 aa).

Lys-116 is modified (N6-(pyridoxal phosphate)lysine).

This sequence belongs to the serine/threonine dehydratase family. DsdA subfamily. Pyridoxal 5'-phosphate serves as cofactor.

The catalysed reaction is D-serine = pyruvate + NH4(+). This is Probable D-serine dehydratase from Bacillus cereus (strain G9842).